Consider the following 195-residue polypeptide: Cysteine/O-acetylserine efflux protein (195 aa).

Topologically, residues 1–9 are periplasmic; sequence MTPMLLSAF. Residues 10–32 traverse the membrane as a helical segment; the sequence is WTYTLITALTPGPNNILALSAAT. Topologically, residues 33–46 are cytoplasmic; it reads AHGFRQSIRVLAGM. A helical membrane pass occupies residues 47–67; sequence SLGFLVVMLLCAGIAFSLAVI. Over 68 to 69 the chain is Periplasmic; the sequence is DP. Residues 70–90 form a helical membrane-spanning segment; it reads AIIHLLSWVGAAYILWLAWKI. Topologically, residues 91 to 104 are cytoplasmic; the sequence is ATSPAADEKVRPKP. A helical transmembrane segment spans residues 105 to 125; it reads VGFWVSFGLQFVNVKIILYGI. Topologically, residues 126-141 are periplasmic; that stretch reads TALSTFVLPQTQALNW. A helical membrane pass occupies residues 142–162; the sequence is VIGVSILLALIGTFGNVCWAL. Residues 163–176 are Cytoplasmic-facing; sequence AGHLFQRAFRHYGR. A helical membrane pass occupies residues 177–194; that stretch reads QLNIILALLLVYCAVRIF. A topological domain (periplasmic) is located at residue Y195.

This sequence belongs to the Rht family.

Its subcellular location is the cell inner membrane. The catalysed reaction is O-acetyl-L-serine(in) = O-acetyl-L-serine(out). It catalyses the reaction L-cysteine(in) = L-cysteine(out). Functionally, exporter of O-acetylserine (OAS) and cysteine. The protein is Cysteine/O-acetylserine efflux protein (eamB) of Salmonella paratyphi A (strain ATCC 9150 / SARB42).